Here is a 204-residue protein sequence, read N- to C-terminus: Thymidylate kinase (204 aa).

11–18 (GLDKSGKT) contributes to the ATP binding site.

The protein belongs to the thymidylate kinase family.

It carries out the reaction dTMP + ATP = dTDP + ADP. Its pathway is pyrimidine metabolism; dTTP biosynthesis. The sequence is that of Thymidylate kinase (TMK) from Vaccinia virus (strain Ankara) (VACV).